The following is a 59-amino-acid chain: uncharacterized protein (59 aa).

This is an uncharacterized protein from Acheta domesticus (House cricket).